A 398-amino-acid polypeptide reads, in one-letter code: Phosphoglycerate kinase (398 aa).

Substrate contacts are provided by residues 21-23, R36, 59-62, R119, and R157; these read DFN and HLGR. ATP contacts are provided by residues K208, G296, E327, and 354-357; that span reads GGDS.

The protein belongs to the phosphoglycerate kinase family. Monomer.

It localises to the cytoplasm. The catalysed reaction is (2R)-3-phosphoglycerate + ATP = (2R)-3-phospho-glyceroyl phosphate + ADP. It participates in carbohydrate degradation; glycolysis; pyruvate from D-glyceraldehyde 3-phosphate: step 2/5. In Streptococcus pneumoniae serotype 2 (strain D39 / NCTC 7466), this protein is Phosphoglycerate kinase.